The sequence spans 252 residues: MSLTGLPDIRKKIGQFHHLRIYKQILSLQGNFARLNYFLGDVFPANLRSASVSVFFEVRLGPRIPDCIVLLKSVDAKDEFAFHCYFFEFKTTLGKSTMQSVHHNCIHQAQYLQGLRQLHQSISFLDQYLIADEVLWNVVPVICFFRQWGLKLDFFKKFSGKTKRLSFSFICDLFARSQDGAVQSLLSIPNYTNFRRACQKHTDLYRRRYQKASKSVLTKTSGENRSRASRQVAKNAPKNRIRRTAKKDAKRQ.

The interval 211 to 252 (KASKSVLTKTSGENRSRASRQVAKNAPKNRIRRTAKKDAKRQ) is disordered. The span at 212-223 (ASKSVLTKTSGE) shows a compositional bias: polar residues. Positions 237 to 252 (PKNRIRRTAKKDAKRQ) are enriched in basic residues.

This sequence belongs to the herpesviridae UL24 family.

The protein localises to the virion. Its subcellular location is the host cytoplasm. It localises to the host nucleus. The protein resides in the host nucleolus. It is found in the host Golgi apparatus. In terms of biological role, may participate in nuclear egress of viral particles. Plays a role in the dispersal of several host nucleolar proteins including NCL/nucleolin and NPM1. Since deletion of host NCL/nucleolin negatively impact on nuclear egress, UL24 supposedly acts on this process through its effect on host nucleoli. This is Protein UL24 homolog (U49) from Homo sapiens (Human).